A 469-amino-acid polypeptide reads, in one-letter code: Exodeoxyribonuclease 7 large subunit (469 aa).

The protein belongs to the XseA family. Heterooligomer composed of large and small subunits.

The protein localises to the cytoplasm. It catalyses the reaction Exonucleolytic cleavage in either 5'- to 3'- or 3'- to 5'-direction to yield nucleoside 5'-phosphates.. In terms of biological role, bidirectionally degrades single-stranded DNA into large acid-insoluble oligonucleotides, which are then degraded further into small acid-soluble oligonucleotides. In Mycoplasma mycoides subsp. mycoides SC (strain CCUG 32753 / NCTC 10114 / PG1), this protein is Exodeoxyribonuclease 7 large subunit.